Here is a 103-residue protein sequence, read N- to C-terminus: Histone H4 (103 aa).

The segment covering 1–14 (MTGRGKGGKGLGKG) has biased composition (gly residues). Positions 1–20 (MTGRGKGGKGLGKGGAKRHR) are disordered. Residue T2 is modified to N-acetylthreonine. Residue K6 is modified to N6-acetyl-N6-methyllysine; alternate. An N6-acetyllysine mark is found at K6, K9, K13, and K17. At K13 the chain carries N6-acetyl-N6-methyllysine; alternate. K21 is subject to N6,N6-dimethyllysine. K32 carries the post-translational modification N6-methyllysine.

It belongs to the histone H4 family. In terms of assembly, the nucleosome is a histone octamer containing two molecules each of H2A, H2B, H3 and H4 assembled in one H3-H4 heterotetramer and two H2A-H2B heterodimers. The octamer wraps approximately 147 bp of DNA.

The protein localises to the nucleus. Its subcellular location is the chromosome. Its function is as follows. Core component of nucleosome. Nucleosomes wrap and compact DNA into chromatin, limiting DNA accessibility to the cellular machineries which require DNA as a template. Histones thereby play a central role in transcription regulation, DNA repair, DNA replication and chromosomal stability. DNA accessibility is regulated via a complex set of post-translational modifications of histones, also called histone code, and nucleosome remodeling. In terms of biological role, a mixture of histones H2B and H4 has antimicrobial activity against the Gram-positive bacterium M.luteus. The polypeptide is Histone H4 (Penaeus vannamei (Whiteleg shrimp)).